A 76-amino-acid polypeptide reads, in one-letter code: Mu-scoloptoxin(15)-Ssm1a (76 aa).

An N-terminal signal peptide occupies residues 1 to 23; the sequence is MEKKIIFLVFLVALLALPGFIST. Positions 33 to 36 are important for inhibition of KCNQ4; it reads KKRK. Disulfide bonds link Cys43-Cys69 and Cys47-Cys71.

The protein belongs to the scoloptoxin-15 family. As to expression, expressed by the venom gland.

It is found in the secreted. Its function is as follows. Blocks voltage-gated potassium channels Kv7.4/KCNQ4 (IC(50)=2.5 uM), Kv7.1/KCNQ1 (IC(50)=2.8 uM), Kv7.2/KCNQ2 (IC(50)=2.7 uM) and Kv7.5/KCNQ5 (IC(50)=2.7 uM). Targets the pore domain, in particular negatively charged residues 'Asp-266' and 'Asp-288', of KCNQ4 and probably other KCNQ channel family members where these residues are conserved. In vivo, shows vasoconstrictive activity resulting in acute hypertension when injected intravenously in mice. Also induces coronary vasospasms ultimately leading to heart failure. Induces seizures when injected into the hippocampus of mice. Decreases respiratory rate while increasing respiratory amplitude, probably by triggering a contraction of the bronchial ring. The protein is Mu-scoloptoxin(15)-Ssm1a of Scolopendra mutilans (Chinese red-headed centipede).